Consider the following 43-residue polypeptide: Neurotrophin-3 (43 aa).

Belongs to the NGF-beta family.

It is found in the secreted. Seems to promote the survival of visceral and proprioceptive sensory neurons. The chain is Neurotrophin-3 (ntf3) from Raja clavata (Thornback ray).